A 174-amino-acid polypeptide reads, in one-letter code: Ribosome maturation factor RimM (174 aa).

Positions 91 to 164 (DDAWYPHQLQ…KVVLSPPGGL (74 aa)) constitute a PRC barrel domain.

The protein belongs to the RimM family. As to quaternary structure, binds ribosomal protein uS19.

It localises to the cytoplasm. Functionally, an accessory protein needed during the final step in the assembly of 30S ribosomal subunit, possibly for assembly of the head region. Essential for efficient processing of 16S rRNA. May be needed both before and after RbfA during the maturation of 16S rRNA. It has affinity for free ribosomal 30S subunits but not for 70S ribosomes. The polypeptide is Ribosome maturation factor RimM (Kineococcus radiotolerans (strain ATCC BAA-149 / DSM 14245 / SRS30216)).